We begin with the raw amino-acid sequence, 114 residues long: Small ribosomal subunit protein eS25 (114 aa).

Positions 1–33 are disordered; that stretch reads MAPKKDKAPPPSSKPAKSGGKQKKKKWSKGKQK. Residues 20-30 are compositionally biased toward basic residues; that stretch reads GKQKKKKWSKG.

Belongs to the eukaryotic ribosomal protein eS25 family.

This is Small ribosomal subunit protein eS25 (RPS25) from Amaranthus cruentus (Purple amaranth).